The primary structure comprises 542 residues: Chaperonin GroEL 2 (542 aa).

Residues 30–33 (TLGP), Lys51, 87–91 (DGTTT), Gly415, and Asp495 contribute to the ATP site.

It belongs to the chaperonin (HSP60) family. In terms of assembly, forms a cylinder of 14 subunits composed of two heptameric rings stacked back-to-back. Interacts with the co-chaperonin GroES.

It is found in the cytoplasm. It carries out the reaction ATP + H2O + a folded polypeptide = ADP + phosphate + an unfolded polypeptide.. In terms of biological role, together with its co-chaperonin GroES, plays an essential role in assisting protein folding. The GroEL-GroES system forms a nano-cage that allows encapsulation of the non-native substrate proteins and provides a physical environment optimized to promote and accelerate protein folding. The chain is Chaperonin GroEL 2 from Methylococcus capsulatus (strain ATCC 33009 / NCIMB 11132 / Bath).